The chain runs to 675 residues: DNA ligase (675 aa).

NAD(+) is bound by residues 35–39, 84–85, and glutamate 115; these read DSEYD and SL. The N6-AMP-lysine intermediate role is filled by lysine 117. Residues arginine 138, glutamate 175, lysine 292, and lysine 316 each contribute to the NAD(+) site. Residues cysteine 410, cysteine 413, cysteine 428, and cysteine 434 each coordinate Zn(2+). Residues 593-675 form the BRCT domain; the sequence is QIVQPLLGRT…RNFLDDTSFP (83 aa).

Belongs to the NAD-dependent DNA ligase family. LigA subfamily. It depends on Mg(2+) as a cofactor. Requires Mn(2+) as cofactor.

The catalysed reaction is NAD(+) + (deoxyribonucleotide)n-3'-hydroxyl + 5'-phospho-(deoxyribonucleotide)m = (deoxyribonucleotide)n+m + AMP + beta-nicotinamide D-nucleotide.. DNA ligase that catalyzes the formation of phosphodiester linkages between 5'-phosphoryl and 3'-hydroxyl groups in double-stranded DNA using NAD as a coenzyme and as the energy source for the reaction. It is essential for DNA replication and repair of damaged DNA. The chain is DNA ligase from Nitrosococcus oceani (strain ATCC 19707 / BCRC 17464 / JCM 30415 / NCIMB 11848 / C-107).